The following is a 92-amino-acid chain: Large ribosomal subunit protein bL27 (92 aa).

The segment at 1-22 (MAHTKAGGSTRNGRDSRGQRLG) is disordered.

It belongs to the bacterial ribosomal protein bL27 family.

The chain is Large ribosomal subunit protein bL27 from Mycoplasmopsis agalactiae (strain NCTC 10123 / CIP 59.7 / PG2) (Mycoplasma agalactiae).